The following is a 648-amino-acid chain: RalA-binding protein 1 (648 aa).

The segment at methionine 1–aspartate 158 is disordered. Threonine 2 carries the post-translational modification N-acetylthreonine. A compositionally biased stretch (polar residues) spans leucine 24–isoleucine 33. Phosphoserine occurs at positions 29, 30, and 34. Threonine 44 is subject to Phosphothreonine. Phosphoserine occurs at positions 48 and 62. Over residues aspartate 52–histidine 68 the composition is skewed to basic and acidic residues. Glycine 69–lysine 74 lines the ATP pocket. Basic residues predominate over residues glycine 69 to glutamate 79. Serine 92 and serine 93 each carry phosphoserine. The span at lysine 102–serine 118 shows a compositional bias: basic residues. A nuclear localization signal region spans residues lysine 102 to lysine 119. The span at lysine 119–threonine 155 shows a compositional bias: basic and acidic residues. The interval leucine 154–tyrosine 219 is mediates association with membranes and could form transmembrane domains. Positions valine 192–leucine 380 constitute a Rho-GAP domain. Residues arginine 403–methionine 499 form a mediates interaction with RALA and RALB region. An ATP-binding site is contributed by glycine 418–lysine 425. Phosphoserine occurs at positions 461 and 463. The segment at glutamate 500–isoleucine 648 is mediates interaction with REPS1 and REPS2. 2 disordered regions span residues glutamine 525–leucine 552 and arginine 598–isoleucine 648. Acidic residues predominate over residues glutamate 536 to leucine 552. A compositionally biased stretch (basic and acidic residues) spans arginine 629–isoleucine 648. Serine 638 carries the post-translational modification Phosphoserine.

Interacts with the GTP-bound form of RALA (via effector domain); during mitosis, recruits RALBP1 to the mitochondrion where it promotes DNM1L phosphorylation and mitochondrial fission. Interacts with DNM1L; mediates its mitotic kinase cyclin B-CDK1-mediated phosphorylation during mitosis to promote mitochondrial fission. Interacts with the mitotic kinase cyclin B-CDK1 during mitosis. Interacts with the GTP-bound form of RALB (via effector domain). Interacts with REPS1; the interaction is direct and does not affect RALA-binding nor GTPase activator activity of RALBP1. Interacts with REPS2; the interaction is direct and does not affect RALA-binding nor GTPase activator activity of RALBP1. Interacts with EPN1, NUMB and TFAP2A during interphase and mitosis. Interacts with AP2M1; as part of the AP2 complex. Interacts with CDC42. Interacts with RAC1. In terms of processing, tyrosine-phosphorylated upon stimulation of cells with EGF. Post-translationally, may undergo proteolytic cleavage to give peptides which reassemble to form a transporter complex. Ubiquitous. The highest level of expression was observed in ovaries and skeletal muscle, whereas the lowest was found in spleen, liver and peripheral blood leukocytes.

It is found in the cell membrane. The protein resides in the cytoplasm. The protein localises to the cytosol. Its subcellular location is the cytoskeleton. It localises to the spindle pole. It is found in the nucleus. The protein resides in the mitochondrion. The enzyme catalyses an S-substituted glutathione(in) + ATP + H2O = an S-substituted glutathione(out) + ADP + phosphate + H(+). The catalysed reaction is ATP + H2O + xenobioticSide 1 = ADP + phosphate + xenobioticSide 2.. It carries out the reaction leukotriene C4(in) + ATP + H2O = leukotriene C4(out) + ADP + phosphate + H(+). Multifunctional protein that functions as a downstream effector of RALA and RALB. As a GTPase-activating protein/GAP can inactivate CDC42 and RAC1 by stimulating their GTPase activity. As part of the Ral signaling pathway, may also regulate ligand-dependent EGF and insulin receptors-mediated endocytosis. During mitosis, may act as a scaffold protein in the phosphorylation of EPSIN/EPN1 by the mitotic kinase cyclin B-CDK1, preventing endocytosis during that phase of the cell cycle. During mitosis, also controls mitochondrial fission as an effector of RALA. Recruited to mitochondrion by RALA, acts as a scaffold to foster the mitotic kinase cyclin B-CDK1-mediated phosphorylation and activation of DNM1L. Functionally, could also function as a primary ATP-dependent active transporter for glutathione conjugates of electrophiles. May also actively catalyze the efflux of a wide range of substrates including xenobiotics like doxorubicin (DOX) contributing to cell multidrug resistance. The chain is RalA-binding protein 1 from Mus musculus (Mouse).